The following is a 106-amino-acid chain: Serine rich endogenous peptide 7 (106 aa).

The N-terminal stretch at 1 to 26 is a signal peptide; it reads MGKKCSSKFRQMLVLVLLLIVFTCLS. Composition is skewed to basic and acidic residues over residues 46–56 and 65–77; these read GIEDEGQERTH and RSVE…EGRR. Residues 46 to 106 are disordered; the sequence is GIEDEGQERT…GGGRIPVAAS (61 aa). Short sequence motifs (SCOOP motif) lie at residues 58 to 72 and 86 to 100; these read LNSK…KTHH and GIRA…GGGR. 2 consecutive short sequence motifs (sxS motif essential for MIK2 binding) follow at residues 64–66 and 92–94; these read SRS and SKS.

This sequence belongs to the serine rich endogenous peptide (SCOOP) phytocytokine family. Interacts with MIK2 (via extracellular leucine-rich repeat domain); this interaction triggers the formation of complex between MIK2 and the BAK1/SERK3 and SERK4 coreceptors, and subsequent BAK1 activation by phosphorylation. As to expression, mostly expressed in roots, and, to a lower extent, in seedlings shoots.

It localises to the cell membrane. Its subcellular location is the secreted. It is found in the extracellular space. The protein localises to the apoplast. Its function is as follows. Brassicaceae-specific phytocytokine (plant endogenous peptide released into the apoplast) perceived by MIK2 in a BAK1/SERK3 and SERK4 coreceptors-dependent manner, that modulates various physiological and antimicrobial processes including growth prevention and reactive oxygen species (ROS) response regulation. This Arabidopsis thaliana (Mouse-ear cress) protein is Serine rich endogenous peptide 7.